A 528-amino-acid polypeptide reads, in one-letter code: Facilitator of iron transport 1 (528 aa).

The first 18 residues, 1 to 18 (MKLSSAFVLSAITVAALG), serve as a signal peptide directing secretion. 3 consecutive repeat copies span residues 20–98 (SITT…GSGS), 99–168 (SITT…GSGS), and 169–233 (SITT…GSGS). The tract at residues 20 to 274 (SITTTITATK…ERAPASTVAT (255 aa)) is 4 X approximate tandem repeats. 3 disordered regions span residues 79–100 (SIVE…GSSI), 145–172 (AAET…SITT), and 214–234 (ASPV…SGSS). 2 stretches are compositionally biased toward polar residues: residues 81–93 (VEPS…TSAD) and 145–163 (AAET…TSAD). The 1-4; truncated repeat unit spans residues 234-274 (SITTTITATKNGHVYTKTVTQDATFVWTGEGERAPASTVAT). Repeat copies occupy residues 289–294 (SIVEAS), 295–300 (SAVETS), 301–306 (SAAETS), 307–312 (SAVETS), 313–318 (SAVETS), 319–324 (SAVETS), 325–330 (SAAETS), 331–336 (SAAETS), 337–342 (SAVETS), 343–348 (SAVEIS), 349–353 (SAVET), and 354–359 (SAVETS). The segment at 289–359 (SIVEASSAVE…AVETSAVETS (71 aa)) is 12 X 6 AA approximate tandem repeats, Ser/Thr-rich. Low complexity-rich tracts occupy residues 298–388 (ETSS…QASS) and 398–435 (TSSV…SSAT). Positions 298–471 (ETSSAAETSS…SNNWSSSSSA (174 aa)) are disordered. An N-linked (GlcNAc...) asparagine glycan is attached at asparagine 412. Residues 446 to 457 (YTESSSRDAQSV) are compositionally biased toward polar residues. Over residues 462–471 (SNNWSSSSSA) the composition is skewed to low complexity. The N-linked (GlcNAc...) asparagine glycan is linked to asparagine 464. 488 to 495 (GIFTNGKS) provides a ligand contact to ATP. Asparagine 503 is a glycosylation site (N-linked (GlcNAc...) asparagine). The GPI-anchor amidated glycine moiety is linked to residue glycine 506. The propeptide at 507–528 (AADSIAAGTGLMGAALAAVIFL) is removed in mature form.

In terms of processing, the GPI-anchor is attached to the protein in the endoplasmic reticulum and serves to target the protein to the cell surface. There, the glucosamine-inositol phospholipid moiety is cleaved off and the GPI-modified mannoprotein is covalently attached via its lipidless GPI glycan remnant to the 1,6-beta-glucan of the outer cell wall layer.

The protein localises to the secreted. It localises to the cell wall. The protein resides in the membrane. Involved in the uptake of non-siderophore sources of iron and the siderophores ferrioxamine B and ferrichrome. Has a role in the retention of iron in the cell wall and periplasmic space. This is Facilitator of iron transport 1 (FIT1) from Saccharomyces cerevisiae (strain ATCC 204508 / S288c) (Baker's yeast).